The sequence spans 272 residues: tRNA pseudouridine synthase B (272 aa).

Aspartate 38 (nucleophile) is an active-site residue.

Belongs to the pseudouridine synthase TruB family. Type 1 subfamily.

It carries out the reaction uridine(55) in tRNA = pseudouridine(55) in tRNA. Its function is as follows. Responsible for synthesis of pseudouridine from uracil-55 in the psi GC loop of transfer RNAs. The sequence is that of tRNA pseudouridine synthase B from Campylobacter jejuni subsp. jejuni serotype O:23/36 (strain 81-176).